An 86-amino-acid chain; its full sequence is MeuNaTxbeta-1 (86 aa).

Positions 1–20 (MMKIIIFLIVSSLVLIGVKT) are cleaved as a signal peptide. Residues 21-83 (DNGYLLDKYT…LWHYETNKCN (63 aa)) enclose the LCN-type CS-alpha/beta domain. Disulfide bonds link C32/C82, C36/C57, C43/C64, and C47/C66.

Expressed by the venom gland.

The protein localises to the secreted. Functionally, inhibits sodium channels (Nav). Also moderately inhibits human calcium-activated potassium channel KCa1.1/KCNMA1/BK (41.9% decrease at 2 uM toxin concentration). Shows moderate antimicrobial activity against both Gram-positive and -negative bacteria. The sequence is that of MeuNaTxbeta-1 from Mesobuthus eupeus (Lesser Asian scorpion).